The primary structure comprises 312 residues: Methionyl-tRNA formyltransferase (312 aa).

Residue 110-113 (SLLP) participates in (6S)-5,6,7,8-tetrahydrofolate binding.

It belongs to the Fmt family.

It carries out the reaction L-methionyl-tRNA(fMet) + (6R)-10-formyltetrahydrofolate = N-formyl-L-methionyl-tRNA(fMet) + (6S)-5,6,7,8-tetrahydrofolate + H(+). Its function is as follows. Attaches a formyl group to the free amino group of methionyl-tRNA(fMet). The formyl group appears to play a dual role in the initiator identity of N-formylmethionyl-tRNA by promoting its recognition by IF2 and preventing the misappropriation of this tRNA by the elongation apparatus. This Mycobacterium ulcerans (strain Agy99) protein is Methionyl-tRNA formyltransferase.